Consider the following 194-residue polypeptide: Cilia- and flagella-associated protein 107 (194 aa).

2 mn regions span residues 45 to 60 and 95 to 107; these read TPQS…FPDH and ISTY…RHGY.

As to quaternary structure, microtubule inner protein component of sperm flagellar doublet microtubules. In terms of tissue distribution, expressed in airway epithelial cells.

Its subcellular location is the cytoplasm. The protein resides in the cytoskeleton. It localises to the cilium axoneme. The protein localises to the flagellum axoneme. Its function is as follows. Microtubule inner protein (MIP) part of the dynein-decorated doublet microtubules (DMTs) in cilia axoneme, which is required for motile cilia beating. The protein is Cilia- and flagella-associated protein 107 of Homo sapiens (Human).